A 304-amino-acid polypeptide reads, in one-letter code: Secreted mono- and diacylglycerol lipase MDL3 (304 aa).

An N-terminal signal peptide occupies residues 1 to 19 (MIVGPVISLLLSYFVLVSG). A disulfide bridge links Cys55 with Cys297. Asn161 is a glycosylation site (N-linked (GlcNAc...) asparagine). Ser171 serves as the catalytic Nucleophile. Active-site residues include Asp228 and His281.

It belongs to the AB hydrolase superfamily. Lipase family. Class 3 subfamily.

It localises to the secreted. The protein localises to the cell wall. The enzyme catalyses a monoacylglycerol + H2O = glycerol + a fatty acid + H(+). It catalyses the reaction a diacylglycerol + H2O = a monoacylglycerol + a fatty acid + H(+). Functionally, secreted lipase involved in Dandruff and seborrheic dermatitis (D/SD) probably via lipase-mediated breakdown of sebaceous lipids and release of irritating free fatty acids. Shows activity against monoglyceride and diglyceride substrates, but not triglyceride substrates and does not exhibit regio-selective production of diacylglycerols. Hydrolyzes distearin, dilinolein, dipalmitoylglycerol and dipalmitolein. Cleaves oleic acid from 1,2 isomers of diolein on both the 1 and the 2 position of the glycerol backbone, resulting mainly in free fatty acids but no monoolein is detected. Shows activity on monoolein and liberates mostly free fatty acids, but can also perform the reverse reaction and produce diolein. The chain is Secreted mono- and diacylglycerol lipase MDL3 from Malassezia globosa (strain ATCC MYA-4612 / CBS 7966) (Dandruff-associated fungus).